The chain runs to 1701 residues: Coiled-coil domain-containing protein 180 (1701 aa).

The interval 1 to 35 (MRGGENRPPARVQSSSEELELRHQSLDAFPGRRLP) is disordered. Residues 171 to 198 (QRQAEHKRKSYESALASFQEEIAQVGKE) adopt a coiled-coil conformation. Disordered regions lie at residues 657–808 (EKPS…DKEE), 1272–1291 (HHCDKDPSQTGRGAWACGSR), and 1319–1354 (GFKRHRCQPENSGKKAVPSASATSAGSFTPHPKPNK). Over residues 661–671 (QKRVKKLRKKQ) the composition is skewed to basic residues. Basic and acidic residues predominate over residues 672–682 (GSKEDMTRSEE). Polar residues predominate over residues 683–692 (SISSGTSTAR). The segment covering 696 to 705 (EVEEENDQEM) has biased composition (acidic residues). Residues 755–766 (ENVKGQGEKKEE) show a composition bias toward basic and acidic residues. Residues 757 to 804 (VKGQGEKKEESEEEDEKEEEEEEEKLEEEKEEKEAQEEQESLSVGEEE) adopt a coiled-coil conformation. Over residues 767–808 (SEEEDEKEEEEEEEKLEEEKEEKEAQEEQESLSVGEEEDKEE) the composition is skewed to acidic residues.

The protein is Coiled-coil domain-containing protein 180 (CCDC180) of Homo sapiens (Human).